We begin with the raw amino-acid sequence, 270 residues long: 3-methyl-2-oxobutanoate hydroxymethyltransferase (270 aa).

The Mg(2+) site is built by D50 and D89. 3-methyl-2-oxobutanoate-binding positions include 50 to 51 (DS), D89, and K118. E120 is a Mg(2+) binding site. E187 (proton acceptor) is an active-site residue.

Belongs to the PanB family. As to quaternary structure, homodecamer; pentamer of dimers. It depends on Mg(2+) as a cofactor.

It localises to the cytoplasm. The enzyme catalyses 3-methyl-2-oxobutanoate + (6R)-5,10-methylene-5,6,7,8-tetrahydrofolate + H2O = 2-dehydropantoate + (6S)-5,6,7,8-tetrahydrofolate. The protein operates within cofactor biosynthesis; (R)-pantothenate biosynthesis; (R)-pantoate from 3-methyl-2-oxobutanoate: step 1/2. Its function is as follows. Catalyzes the reversible reaction in which hydroxymethyl group from 5,10-methylenetetrahydrofolate is transferred onto alpha-ketoisovalerate to form ketopantoate. This chain is 3-methyl-2-oxobutanoate hydroxymethyltransferase, found in Helicobacter pylori (strain ATCC 700392 / 26695) (Campylobacter pylori).